A 276-amino-acid chain; its full sequence is ATP synthase subunit a 2 (276 aa).

5 consecutive transmembrane segments (helical) span residues 45-65 (AVHVDSLGWSIALGALFVWLF), 105-125 (VIAPLALTVFCWIFLMNLMDL), 154-173 (VNVTLGMSLSVFFLIIYYSI), 226-246 (LLFILIALMPFWAQWALSVPW), and 247-267 (AIFHILVIVLQAFIFMMLTIV).

It belongs to the ATPase A chain family. In terms of assembly, F-type ATPases have 2 components, CF(1) - the catalytic core - and CF(0) - the membrane proton channel. CF(1) has five subunits: alpha(3), beta(3), gamma(1), delta(1), epsilon(1). CF(0) has three main subunits: a(1), b(2) and c(9-12). The alpha and beta chains form an alternating ring which encloses part of the gamma chain. CF(1) is attached to CF(0) by a central stalk formed by the gamma and epsilon chains, while a peripheral stalk is formed by the delta and b chains.

The protein localises to the cell inner membrane. Its function is as follows. Key component of the proton channel; it plays a direct role in the translocation of protons across the membrane. The chain is ATP synthase subunit a 2 from Hahella chejuensis (strain KCTC 2396).